The primary structure comprises 117 residues: uncharacterized protein (117 aa).

Residues 1-20 (METKKLIGKPLQPARPVRHL) are disordered.

This is an uncharacterized protein from Homo sapiens (Human).